We begin with the raw amino-acid sequence, 520 residues long: MSNISTDLQDVEKIIVLDYGSQYNQLISRRIREIGVFSELKSHKISAAEVREVNPVGIILSGGPNSVYEDGSFDIDPEIFELGIPILGICYGMQLLTHKLGGKVVPAGDAGNREYGQSTLTHTPSALFESTPDEQTVLMSHGDAVTEIPADFVRTGTSADCPYAAIENPDKHIYGIQFHPEVRHSVYGNDILRNFALNICKAKGDWSMDNFIDMQIKKIRKTVGDKRVLLGLSGGVDSSVVGVLLQKAIGDQLICIFVDHGLLRKGEADQVMDMLGGKFGLNIVKADAAKRFLDKLAGVSDPEQKRKIIGNEFVYVFDDEASKLKDVKFLAQGTLYTDVIESGTDTAQTIKSHHNVGGLPEDMQFELIEPLNTLYKDEVRALGTELGMPDHIVWRQPFPGPGLAIRVMGEITEEKLETVRESDAILREEIAKAGLDRDIWQYFTVNTGVRSVGVMGDGRTYDYTIAIRAITSIDGMTADFAKIPWEVLQKISVRIVNEVDHVNRIVYDITSKPPATVEWE.

A Glutamine amidotransferase type-1 domain is found at Lys13–Asp205. Cys90 serves as the catalytic Nucleophile. Catalysis depends on residues His179 and Glu181. Residues Trp206–Arg395 enclose the GMPS ATP-PPase domain. Ser233 to Ser239 provides a ligand contact to ATP.

Homodimer.

It carries out the reaction XMP + L-glutamine + ATP + H2O = GMP + L-glutamate + AMP + diphosphate + 2 H(+). It participates in purine metabolism; GMP biosynthesis; GMP from XMP (L-Gln route): step 1/1. Catalyzes the synthesis of GMP from XMP. This chain is GMP synthase [glutamine-hydrolyzing], found in Streptococcus pneumoniae (strain CGSP14).